A 386-amino-acid chain; its full sequence is Zinc finger protein 385A (386 aa).

The Matrin-type 1 zinc-finger motif lies at 74–98 (ISCNVCQIRFNSQSQAEAHYKGNRH). The segment at 88–193 (QAEAHYKGNR…ASLPGGSKEE (106 aa)) is disordered. A compositionally biased stretch (basic and acidic residues) spans 103–121 (KGIEAAKTRGREPSVRESG). The necessary for binding to ITPR1, CEBPA and p53/TP53 mRNAs stretch occupies residues 145–351 (NGLGPAPGSP…AGSPLSLRPA (207 aa)). The residue at position 185 (S185) is a Phosphoserine. The Matrin-type 2 zinc-finger motif lies at 201 to 225 (LYCALCKVAVNSLSQLEAHNKGTKH). At T248 the chain carries Phosphothreonine. Residues 261-285 (FHCEICNVKVNSEVQLKQHISSRRH) form a Matrin-type 3 zinc finger. The tract at residues 279–305 (HISSRRHRDGVAGKPNPLLSRHKKPRG) is disordered.

As to quaternary structure, interacts with p53/TP53; the interaction is direct and enhances p53/TP53 transactivation functions on cell-cycle arrest target genes, resulting in growth arrest. Interacts with ELAVL1; the interaction is indirect, mRNA-dependent and may regulate p53/TP53 expression. Post-translationally, ubiquitinated upon prolonged exposure to genotoxic stress, which leads to proteasomal degradation of ZNF385A and releases p53/TP53 from cell-cycle arrest target gene promoters. Expressed in brain and testis (at protein level). In brain, the expression is located to olfactory bulb, cerebral cortex, hippocampus, satellite cells and Purkinje cells of the cerebellum molecular layer. Detected in bone marrow, white and brown adipose tissue, lung and at lower levels in the thymus.

It localises to the cytoplasm. It is found in the nucleus. The protein resides in the nucleolus. The protein localises to the cell projection. Its subcellular location is the dendrite. Its function is as follows. RNA-binding protein that affects the localization and the translation of a subset of mRNA. May play a role in adipogenesis through binding to the 3'-UTR of CEBPA mRNA and regulation of its translation. Targets ITPR1 mRNA to dendrites in Purkinje cells, and may regulate its activity-dependent translation. With ELAVL1, binds the 3'-UTR of p53/TP53 mRNAs to control their nuclear export induced by CDKN2A. Hence, may regulate p53/TP53 expression and mediate in part the CDKN2A anti-proliferative activity. May also bind CCNB1 mRNA. Alternatively, may also regulate p53/TP53 activity through direct protein-protein interaction. Interacts with p53/TP53 and promotes cell-cycle arrest over apoptosis enhancing preferentially the DNA binding and transactivation of p53/TP53 on cell-cycle arrest target genes over proapoptotic target genes. May also regulate the ubiquitination and stability of CDKN1A promoting DNA damage-induced cell cycle arrest. Also plays a role in megakaryocytes differentiation. This Mus musculus (Mouse) protein is Zinc finger protein 385A (Znf385a).